The primary structure comprises 407 residues: Phosphopentomutase (407 aa).

Residues Asp10, Asp306, His311, Asp347, His348, and His359 each coordinate Mn(2+).

It belongs to the phosphopentomutase family. The cofactor is Mn(2+).

It localises to the cytoplasm. It carries out the reaction 2-deoxy-alpha-D-ribose 1-phosphate = 2-deoxy-D-ribose 5-phosphate. The enzyme catalyses alpha-D-ribose 1-phosphate = D-ribose 5-phosphate. It participates in carbohydrate degradation; 2-deoxy-D-ribose 1-phosphate degradation; D-glyceraldehyde 3-phosphate and acetaldehyde from 2-deoxy-alpha-D-ribose 1-phosphate: step 1/2. In terms of biological role, isomerase that catalyzes the conversion of deoxy-ribose 1-phosphate (dRib-1-P) and ribose 1-phosphate (Rib-1-P) to deoxy-ribose 5-phosphate (dRib-5-P) and ribose 5-phosphate (Rib-5-P), respectively. This Sodalis glossinidius (strain morsitans) protein is Phosphopentomutase.